We begin with the raw amino-acid sequence, 497 residues long: ATP synthase subunit alpha 2 (497 aa).

Residue 167–174 (GERATGKT) coordinates ATP.

The protein belongs to the ATPase alpha/beta chains family. In terms of assembly, F-type ATPases have 2 components, CF(1) - the catalytic core - and CF(0) - the membrane proton channel. CF(1) has five subunits: alpha(3), beta(3), gamma(1), delta(1), epsilon(1). CF(0) has four main subunits: a(1), b(1), b'(1) and c(9-12).

The protein resides in the cell inner membrane. The enzyme catalyses ATP + H2O + 4 H(+)(in) = ADP + phosphate + 5 H(+)(out). Functionally, produces ATP from ADP in the presence of a proton gradient across the membrane. The alpha chain is a regulatory subunit. The chain is ATP synthase subunit alpha 2 from Cereibacter sphaeroides (strain ATCC 17023 / DSM 158 / JCM 6121 / CCUG 31486 / LMG 2827 / NBRC 12203 / NCIMB 8253 / ATH 2.4.1.) (Rhodobacter sphaeroides).